Reading from the N-terminus, the 277-residue chain is Multiple sugar-binding transport system permease protein MsmG (277 aa).

Helical transmembrane passes span 13-33, 74-94, 110-130, 141-161, 198-218, and 243-263; these read YVLL…TVFS, VITV…AYSI, LLIL…TVMM, LIIL…VGYI, TTLI…LLIL, and GPSF…YLIF. The region spanning 69–263 is the ABC transmembrane type-1 domain; the sequence is FWNSTVITVL…ITITIVYLIF (195 aa).

It belongs to the binding-protein-dependent transport system permease family. MalFG subfamily.

The protein resides in the cell membrane. Functionally, involved in a binding protein-dependent transport system responsible for the uptake of melibiose, raffinose and isomaltotriose. The polypeptide is Multiple sugar-binding transport system permease protein MsmG (msmG) (Streptococcus mutans serotype c (strain ATCC 700610 / UA159)).